Here is a 325-residue protein sequence, read N- to C-terminus: Acetyl-coenzyme A carboxylase carboxyl transferase subunit alpha (325 aa).

Positions 44–298 constitute a CoA carboxyltransferase C-terminal domain; the sequence is QLEARADQLR…KAAIQDNLQA (255 aa).

The protein belongs to the AccA family. In terms of assembly, acetyl-CoA carboxylase is a heterohexamer composed of biotin carboxyl carrier protein (AccB), biotin carboxylase (AccC) and two subunits each of ACCase subunit alpha (AccA) and ACCase subunit beta (AccD).

Its subcellular location is the cytoplasm. It carries out the reaction N(6)-carboxybiotinyl-L-lysyl-[protein] + acetyl-CoA = N(6)-biotinyl-L-lysyl-[protein] + malonyl-CoA. Its pathway is lipid metabolism; malonyl-CoA biosynthesis; malonyl-CoA from acetyl-CoA: step 1/1. Component of the acetyl coenzyme A carboxylase (ACC) complex. First, biotin carboxylase catalyzes the carboxylation of biotin on its carrier protein (BCCP) and then the CO(2) group is transferred by the carboxyltransferase to acetyl-CoA to form malonyl-CoA. The sequence is that of Acetyl-coenzyme A carboxylase carboxyl transferase subunit alpha from Picosynechococcus sp. (strain ATCC 27264 / PCC 7002 / PR-6) (Agmenellum quadruplicatum).